The chain runs to 260 residues: Indole-3-glycerol phosphate synthase (260 aa).

The protein belongs to the TrpC family.

The catalysed reaction is 1-(2-carboxyphenylamino)-1-deoxy-D-ribulose 5-phosphate + H(+) = (1S,2R)-1-C-(indol-3-yl)glycerol 3-phosphate + CO2 + H2O. The protein operates within amino-acid biosynthesis; L-tryptophan biosynthesis; L-tryptophan from chorismate: step 4/5. The polypeptide is Indole-3-glycerol phosphate synthase (Neisseria gonorrhoeae (strain ATCC 700825 / FA 1090)).